We begin with the raw amino-acid sequence, 388 residues long: Chorismate synthase (388 aa).

Arg-39 and Arg-45 together coordinate NADP(+). The interval 95–118 is disordered; the sequence is EKNEKSRRVSRPRPGHADLVGGMK. FMN is bound by residues 130–132, 251–252, Gly-296, 311–315, and Arg-337; these read RSS, NA, and KPIPT.

Belongs to the chorismate synthase family. As to quaternary structure, homotetramer. FMNH2 is required as a cofactor.

It carries out the reaction 5-O-(1-carboxyvinyl)-3-phosphoshikimate = chorismate + phosphate. It participates in metabolic intermediate biosynthesis; chorismate biosynthesis; chorismate from D-erythrose 4-phosphate and phosphoenolpyruvate: step 7/7. In terms of biological role, catalyzes the anti-1,4-elimination of the C-3 phosphate and the C-6 proR hydrogen from 5-enolpyruvylshikimate-3-phosphate (EPSP) to yield chorismate, which is the branch point compound that serves as the starting substrate for the three terminal pathways of aromatic amino acid biosynthesis. This reaction introduces a second double bond into the aromatic ring system. The chain is Chorismate synthase from Listeria innocua serovar 6a (strain ATCC BAA-680 / CLIP 11262).